The primary structure comprises 812 residues: Probable beta-glucosidase D (812 aa).

The first 18 residues, 1 to 18, serve as a signal peptide directing secretion; sequence MRVPSLSVLSFLLGTALA. Residues Asn-53 and Asn-188 are each glycosylated (N-linked (GlcNAc...) asparagine). Residues 186–248 are disordered; it reads ETNRTGGMGG…GMGGGMAGSS (63 aa). Positions 191-207 are enriched in gly residues; it reads GGMGGGGGAPGGGGMGR. Residues 211–225 are compositionally biased toward polar residues; the sequence is FSSSVPGGMSPTSSA. Residues 236-245 are compositionally biased toward gly residues; sequence GGSGMGGGMA. Residue Asn-296 is glycosylated (N-linked (GlcNAc...) asparagine). Residue Asp-324 is part of the active site. N-linked (GlcNAc...) asparagine glycans are attached at residues Asn-360, Asn-384, Asn-422, Asn-501, Asn-592, and Asn-646.

This sequence belongs to the glycosyl hydrolase 3 family.

The protein localises to the secreted. It carries out the reaction Hydrolysis of terminal, non-reducing beta-D-glucosyl residues with release of beta-D-glucose.. The protein operates within glycan metabolism; cellulose degradation. In terms of biological role, beta-glucosidases are one of a number of cellulolytic enzymes involved in the degradation of cellulosic biomass. Catalyzes the last step releasing glucose from the inhibitory cellobiose. This chain is Probable beta-glucosidase D (bglD), found in Emericella nidulans (strain FGSC A4 / ATCC 38163 / CBS 112.46 / NRRL 194 / M139) (Aspergillus nidulans).